The sequence spans 524 residues: Butyrophilin subfamily 1 member A1 (524 aa).

The first 26 residues, 1 to 26 (MAVPTNSCLLVCLLTLTVLQLPTLDS), serve as a signal peptide directing secretion. Topologically, residues 27–247 (AAPFDVTAPQ…APFVPRLTPW (221 aa)) are extracellular. 2 Ig-like V-type domains span residues 29–141 (PFDV…VYLK) and 149–235 (PQIS…VEIS). 2 cysteine pairs are disulfide-bonded: cysteine 51/cysteine 125 and cysteine 165/cysteine 219. N-linked (GlcNAc...) asparagine glycans are attached at residues asparagine 56 and asparagine 216. A helical transmembrane segment spans residues 248-268 (IVAVAIILLALGFLTIGSIFF). At 269–524 (TWKLYKERSS…IPFSPSQAAP (256 aa)) the chain is on the cytoplasmic side. The B30.2/SPRY domain maps to 286–480 (SKERLLEELR…LTICSTANGP (195 aa)).

It belongs to the immunoglobulin superfamily. BTN/MOG family. In terms of assembly, seems to associate with xanthine dehydrogenase/oxidase. In terms of processing, N-glycosylated. In terms of tissue distribution, strongly expressed in lactating mammary tissue (at protein level). About 100-fold lower levels in virgin mammary tissue. Also detected in spleen and thymus at 10-20 times lower levels compared to those detected in virgin mammary gland. Very low levels in several other tissues, including brain, heart, kidney, lymph node, lung and small intestine. In the thymus, detected in the stroma, in epithelial cells (at protein level). Most prominent in medullary areas of the thymus and at the corticomedullary junction (at protein level).

Its subcellular location is the membrane. Functionally, may function in the secretion of milk-fat droplets. May act as a specific membrane-associated receptor for the association of cytoplasmic droplets with the apical plasma membrane. Inhibits the proliferation of CD4 and CD8 T-cells activated by anti-CD3 antibodies, T-cell metabolism and IL2 and IFNG secretion. This is Butyrophilin subfamily 1 member A1 (Btn1a1) from Mus musculus (Mouse).